A 493-amino-acid chain; its full sequence is Protein nucleotidyltransferase YdiU (493 aa).

8 residues coordinate ATP: Gly-96, Gly-98, Arg-99, Lys-119, Asp-131, Gly-132, Arg-182, and Arg-189. Residue Asp-258 is the Proton acceptor of the active site. Residues Asn-259 and Asp-268 each contribute to the Mg(2+) site. Residue Asp-268 participates in ATP binding. Residues 471 to 493 form a disordered region; it reads EKYTEFKNPPAPKERVSQTFCGT.

It belongs to the SELO family. Requires Mg(2+) as cofactor. It depends on Mn(2+) as a cofactor.

The catalysed reaction is L-seryl-[protein] + ATP = 3-O-(5'-adenylyl)-L-seryl-[protein] + diphosphate. It carries out the reaction L-threonyl-[protein] + ATP = 3-O-(5'-adenylyl)-L-threonyl-[protein] + diphosphate. The enzyme catalyses L-tyrosyl-[protein] + ATP = O-(5'-adenylyl)-L-tyrosyl-[protein] + diphosphate. It catalyses the reaction L-histidyl-[protein] + UTP = N(tele)-(5'-uridylyl)-L-histidyl-[protein] + diphosphate. The catalysed reaction is L-seryl-[protein] + UTP = O-(5'-uridylyl)-L-seryl-[protein] + diphosphate. It carries out the reaction L-tyrosyl-[protein] + UTP = O-(5'-uridylyl)-L-tyrosyl-[protein] + diphosphate. Nucleotidyltransferase involved in the post-translational modification of proteins. It can catalyze the addition of adenosine monophosphate (AMP) or uridine monophosphate (UMP) to a protein, resulting in modifications known as AMPylation and UMPylation. The sequence is that of Protein nucleotidyltransferase YdiU from Nitrosococcus oceani (strain ATCC 19707 / BCRC 17464 / JCM 30415 / NCIMB 11848 / C-107).